A 282-amino-acid polypeptide reads, in one-letter code: Phosphoglucan phosphatase LSF2, chloroplastic (282 aa).

A chloroplast-targeting transit peptide spans 1–61 (MSVIGSKSCI…GENPGTNGVS (61 aa)). Substrate-binding positions include Y83, 153–156 (RHMR), D161, and 177–180 (SLEW). The region spanning 92 to 249 (NYTLIRDELI…TYDLAKNDPW (158 aa)) is the Tyrosine-protein phosphatase domain. Residue C193 is the Phosphocysteine intermediate of the active site. Residues 193-199 (CSAGLGR) carry the Glucan phosphatase signature motif CXAGXGR motif. Residues 194-199 (SAGLGR), G230, K245, E251, 259-263 (NAFED), and E268 contribute to the substrate site.

As to expression, widely expressed.

It localises to the plastid. The protein localises to the chloroplast. Functionally, starch-associated phosphoglucan phosphatase that selectively dephosphorylates the glucan C3 position. Probably participates in the regulation of starch degradation. In Arabidopsis thaliana (Mouse-ear cress), this protein is Phosphoglucan phosphatase LSF2, chloroplastic (LSF2).